Here is a 719-residue protein sequence, read N- to C-terminus: Phosphoribosylformylglycinamidine synthase subunit PurL (719 aa).

Histidine 47 is a catalytic residue. Positions 50 and 89 each coordinate ATP. Glutamate 91 provides a ligand contact to Mg(2+). Residues 92-95 and arginine 114 contribute to the substrate site; that span reads SHNH. Histidine 93 acts as the Proton acceptor in catalysis. A Mg(2+)-binding site is contributed by aspartate 115. Glutamine 238 lines the substrate pocket. Aspartate 266 contacts Mg(2+). 310–312 is a binding site for substrate; it reads ESQ. ATP is bound by residues aspartate 488 and glycine 525. A Mg(2+)-binding site is contributed by asparagine 526. Substrate is bound at residue serine 528.

The protein belongs to the FGAMS family. In terms of assembly, monomer. Part of the FGAM synthase complex composed of 1 PurL, 1 PurQ and 2 PurS subunits.

It localises to the cytoplasm. It catalyses the reaction N(2)-formyl-N(1)-(5-phospho-beta-D-ribosyl)glycinamide + L-glutamine + ATP + H2O = 2-formamido-N(1)-(5-O-phospho-beta-D-ribosyl)acetamidine + L-glutamate + ADP + phosphate + H(+). Its pathway is purine metabolism; IMP biosynthesis via de novo pathway; 5-amino-1-(5-phospho-D-ribosyl)imidazole from N(2)-formyl-N(1)-(5-phospho-D-ribosyl)glycinamide: step 1/2. Functionally, part of the phosphoribosylformylglycinamidine synthase complex involved in the purines biosynthetic pathway. Catalyzes the ATP-dependent conversion of formylglycinamide ribonucleotide (FGAR) and glutamine to yield formylglycinamidine ribonucleotide (FGAM) and glutamate. The FGAM synthase complex is composed of three subunits. PurQ produces an ammonia molecule by converting glutamine to glutamate. PurL transfers the ammonia molecule to FGAR to form FGAM in an ATP-dependent manner. PurS interacts with PurQ and PurL and is thought to assist in the transfer of the ammonia molecule from PurQ to PurL. In Cereibacter sphaeroides (strain ATCC 17025 / ATH 2.4.3) (Rhodobacter sphaeroides), this protein is Phosphoribosylformylglycinamidine synthase subunit PurL.